Here is a 78-residue protein sequence, read N- to C-terminus: uncharacterized protein (78 aa).

This is an uncharacterized protein from Escherichia coli (strain K12).